A 1015-amino-acid chain; its full sequence is SKI family transcriptional corepressor 2 (1015 aa).

Disordered regions lie at residues 280–316 and 518–934; these read HLLGAPPPPPPPPPPLAELAGAPHAHHKRPRFDDDDD and GAAG…KKDV. Residues 284 to 295 show a composition bias toward pro residues; sequence APPPPPPPPPPL. Residues 575 to 600 show a composition bias toward low complexity; sequence PPADSVAAAGAGAAAAGSGPAGSRVP. The segment covering 628–637 has biased composition (basic and acidic residues); sequence GGKDDAESLA. Over residues 653-669 the composition is skewed to basic residues; the sequence is HPHHHHHPHHHHHHHHP. Pro residues-rich tracts occupy residues 670–684 and 694–708; these read PQPPSPLLLLPPQPD and APPPPPPPPPPPPLA. Composition is skewed to acidic residues over residues 730 to 745 and 754 to 774; these read DSSEDEDDEEEEQEVD and GEEEEEGRDPDDDEEEDEETE. The span at 793-803 shows a compositional bias: basic and acidic residues; sequence PSEKGSSRDRA. The segment covering 832-842 has biased composition (pro residues); it reads DLPPPPPPPLA. Composition is skewed to basic and acidic residues over residues 861 to 877, 885 to 899, and 912 to 922; these read PSLEEQPSYKDSQKTKE, TKDDNSFSDKNKEHS, and FWRERSGEHTQ.

This sequence belongs to the SKI family. In terms of assembly, interacts with SMAD2 and SMAD3. Expressed in cerebellum, spinal cord and testis. Isoform 2 is present in cerebellum (at protein level).

The protein localises to the nucleus. The protein resides in the cytoplasm. Its function is as follows. Exhibits transcriptional repressor activity. Acts as a TGF-beta antagonist in the nervous system. The protein is SKI family transcriptional corepressor 2 of Homo sapiens (Human).